We begin with the raw amino-acid sequence, 354 residues long: Uroporphyrinogen decarboxylase (354 aa).

Substrate-binding positions include 27–31 (RQAGR), aspartate 77, tyrosine 154, threonine 209, and histidine 327.

This sequence belongs to the uroporphyrinogen decarboxylase family. In terms of assembly, homodimer.

Its subcellular location is the cytoplasm. It catalyses the reaction uroporphyrinogen III + 4 H(+) = coproporphyrinogen III + 4 CO2. Its pathway is porphyrin-containing compound metabolism; protoporphyrin-IX biosynthesis; coproporphyrinogen-III from 5-aminolevulinate: step 4/4. In terms of biological role, catalyzes the decarboxylation of four acetate groups of uroporphyrinogen-III to yield coproporphyrinogen-III. The polypeptide is Uroporphyrinogen decarboxylase (Actinobacillus pleuropneumoniae serotype 5b (strain L20)).